A 184-amino-acid polypeptide reads, in one-letter code: MRGTRAAQRYAKAILSLAKDKNSAEAVNEDMISISKTVVNSRDLENMLTSPVIKDSTKKSALLEIFKDLNTITKGAIDILLENGRIGILHLVARQYIIKFNELNNVRQAVVTTAVPLDKELEAVILSKVKELTGSEASLKSVIDEDIIGGFVLRVGDLQYDASVSRNLRRLERELKDNTYVSKI.

It belongs to the ATPase delta chain family. In terms of assembly, F-type ATPases have 2 components, F(1) - the catalytic core - and F(0) - the membrane proton channel. F(1) has five subunits: alpha(3), beta(3), gamma(1), delta(1), epsilon(1). F(0) has three main subunits: a(1), b(2) and c(10-14). The alpha and beta chains form an alternating ring which encloses part of the gamma chain. F(1) is attached to F(0) by a central stalk formed by the gamma and epsilon chains, while a peripheral stalk is formed by the delta and b chains.

The protein localises to the cell membrane. F(1)F(0) ATP synthase produces ATP from ADP in the presence of a proton or sodium gradient. F-type ATPases consist of two structural domains, F(1) containing the extramembraneous catalytic core and F(0) containing the membrane proton channel, linked together by a central stalk and a peripheral stalk. During catalysis, ATP synthesis in the catalytic domain of F(1) is coupled via a rotary mechanism of the central stalk subunits to proton translocation. Its function is as follows. This protein is part of the stalk that links CF(0) to CF(1). It either transmits conformational changes from CF(0) to CF(1) or is implicated in proton conduction. This Christiangramia forsetii (strain DSM 17595 / CGMCC 1.15422 / KT0803) (Gramella forsetii) protein is ATP synthase subunit delta.